A 105-amino-acid chain; its full sequence is Synaptic plasticity regulator PANTS (105 aa).

Belongs to the UPF0545 family. Interacts with RTN4 isoform A/Nogo-A; the interaction results in enhanced RTN4-mediated inhibition of AMPA receptor clustering. Also interacts with NCAM1, RANBP2 and CCT8. In terms of processing, rapidly degraded by proteolysis following neuronal stimulation, resulting in increased AMPA receptor clustering.

The protein resides in the synapse. The protein localises to the synaptic cleft. Its function is as follows. Negatively regulates long-term potentiation and modulates adult synaptic plasticity. Stabilizes the interaction of RTN4 isoform A/Nogo-A with its receptors, inhibiting clustering of postsynaptic AMPA receptors at synaptic sites. Upon neuronal stimulation, degraded at synapses, reducing RTN4 signaling and allowing AMPA receptor clustering at individual synapses. This Homo sapiens (Human) protein is Synaptic plasticity regulator PANTS (C22orf39).